Reading from the N-terminus, the 65-residue chain is DNA-directed RNA polymerase subunit Rpo10 (65 aa).

The Zn(2+) site is built by C7, C10, C44, and C45.

The protein belongs to the archaeal Rpo10/eukaryotic RPB10 RNA polymerase subunit family. In terms of assembly, part of the RNA polymerase complex. Requires Zn(2+) as cofactor.

Its subcellular location is the cytoplasm. The catalysed reaction is RNA(n) + a ribonucleoside 5'-triphosphate = RNA(n+1) + diphosphate. In terms of biological role, DNA-dependent RNA polymerase (RNAP) catalyzes the transcription of DNA into RNA using the four ribonucleoside triphosphates as substrates. In Pyrococcus furiosus (strain ATCC 43587 / DSM 3638 / JCM 8422 / Vc1), this protein is DNA-directed RNA polymerase subunit Rpo10.